Here is a 201-residue protein sequence, read N- to C-terminus: Small ribosomal subunit protein uS4 (201 aa).

Positions 91-154 (TRLDNVVYRA…RKMEWFEEAQ (64 aa)) constitute an S4 RNA-binding domain.

Belongs to the universal ribosomal protein uS4 family. Part of the 30S ribosomal subunit. Contacts protein S5. The interaction surface between S4 and S5 is involved in control of translational fidelity.

Functionally, one of the primary rRNA binding proteins, it binds directly to 16S rRNA where it nucleates assembly of the body of the 30S subunit. Its function is as follows. With S5 and S12 plays an important role in translational accuracy. This is Small ribosomal subunit protein uS4 from Corynebacterium ammoniagenes (Brevibacterium ammoniagenes).